The primary structure comprises 232 residues: Enolase-phosphatase E1 (232 aa).

This sequence belongs to the HAD-like hydrolase superfamily. MasA/MtnC family. In terms of assembly, monomer. It depends on Mg(2+) as a cofactor.

The catalysed reaction is 5-methylsulfanyl-2,3-dioxopentyl phosphate + H2O = 1,2-dihydroxy-5-(methylsulfanyl)pent-1-en-3-one + phosphate. It functions in the pathway amino-acid biosynthesis; L-methionine biosynthesis via salvage pathway; L-methionine from S-methyl-5-thio-alpha-D-ribose 1-phosphate: step 3/6. The protein operates within amino-acid biosynthesis; L-methionine biosynthesis via salvage pathway; L-methionine from S-methyl-5-thio-alpha-D-ribose 1-phosphate: step 4/6. Its function is as follows. Bifunctional enzyme that catalyzes the enolization of 2,3-diketo-5-methylthiopentyl-1-phosphate (DK-MTP-1-P) into the intermediate 2-hydroxy-3-keto-5-methylthiopentenyl-1-phosphate (HK-MTPenyl-1-P), which is then dephosphorylated to form the acireductone 1,2-dihydroxy-3-keto-5-methylthiopentene (DHK-MTPene). The polypeptide is Enolase-phosphatase E1 (Nocardia farcinica (strain IFM 10152)).